A 274-amino-acid polypeptide reads, in one-letter code: MAVIKCKPTSPGRRHVVKVVNSDLHKGKPFAGLLAKKSKSGGRNNTGRITVRHVGGGHKQHYRLIDFKRDKDGIPAKIERLEYDPNRTAHIALVLYADGERRYILAAKGMQAGDKIQSGVEAEIKTGNAMPLRNIPVGSVVHAVEMKPGKGAQIARSAGAYVQVVARDGAYATLRLRSGEMRKVPVDCRATFGEVGNAEHMLRQLGKAGAKRWRGIRPTVRGVAMNPVDHPHGGGEGRTSGGRHPVTPWGVPTKGYKTRSNKRTDKYIVRRRNK.

Residues Val-223–Lys-274 are disordered.

This sequence belongs to the universal ribosomal protein uL2 family. As to quaternary structure, part of the 50S ribosomal subunit. Forms a bridge to the 30S subunit in the 70S ribosome.

Its function is as follows. One of the primary rRNA binding proteins. Required for association of the 30S and 50S subunits to form the 70S ribosome, for tRNA binding and peptide bond formation. It has been suggested to have peptidyltransferase activity; this is somewhat controversial. Makes several contacts with the 16S rRNA in the 70S ribosome. The polypeptide is Large ribosomal subunit protein uL2 (Shewanella oneidensis (strain ATCC 700550 / JCM 31522 / CIP 106686 / LMG 19005 / NCIMB 14063 / MR-1)).